Here is a 166-residue protein sequence, read N- to C-terminus: Lipoprotein signal peptidase (166 aa).

4 helical membrane-spanning segments follow: residues 9–29, 45–65, 71–91, and 100–120; these read ASGALAPWLGISLIVILFDQL, ALTSFFSLVLVYNRGAAFGFL, WQRWAFTALGIGATLVICFLL, and FSLSLALILGGALGNVIDRLV. Active-site residues include Asp-126 and Asp-144. The chain crosses the membrane as a helical span at residues 135–155; it reads WHFPAFNLADSAITIGAVLLV.

This sequence belongs to the peptidase A8 family.

It localises to the cell inner membrane. It carries out the reaction Release of signal peptides from bacterial membrane prolipoproteins. Hydrolyzes -Xaa-Yaa-Zaa-|-(S,diacylglyceryl)Cys-, in which Xaa is hydrophobic (preferably Leu), and Yaa (Ala or Ser) and Zaa (Gly or Ala) have small, neutral side chains.. It functions in the pathway protein modification; lipoprotein biosynthesis (signal peptide cleavage). This protein specifically catalyzes the removal of signal peptides from prolipoproteins. This chain is Lipoprotein signal peptidase, found in Burkholderia ambifaria (strain ATCC BAA-244 / DSM 16087 / CCUG 44356 / LMG 19182 / AMMD) (Burkholderia cepacia (strain AMMD)).